We begin with the raw amino-acid sequence, 400 residues long: Cytochrome b (400 aa).

The next 4 helical transmembrane spans lie at 32-52, 76-98, 113-133, and 179-199; these read FGSL…TLAM, WLIR…LHIG, TWSI…LGYV, and FFSL…MHLI. Positions 82 and 96 each coordinate heme b. Residues His-183 and His-197 each coordinate heme b. Position 202 (His-202) interacts with a ubiquinone. 4 helical membrane passes run 226-246, 290-310, 322-342, and 349-369; these read YLFK…IFVF, AVGV…PYLD, LSKV…QLGA, and FIVF…IIIP.

Belongs to the cytochrome b family. As to quaternary structure, fungal cytochrome b-c1 complex contains 10 subunits; 3 respiratory subunits, 2 core proteins and 5 low-molecular weight proteins. Cytochrome b-c1 complex is a homodimer. It depends on heme b as a cofactor.

The protein resides in the mitochondrion inner membrane. Its function is as follows. Component of the ubiquinol-cytochrome c reductase complex (complex III or cytochrome b-c1 complex) that is part of the mitochondrial respiratory chain. The b-c1 complex mediates electron transfer from ubiquinol to cytochrome c. Contributes to the generation of a proton gradient across the mitochondrial membrane that is then used for ATP synthesis. The chain is Cytochrome b (cob) from Epidermophyton floccosum.